The following is a 277-amino-acid chain: Energy-coupling factor transporter ATP-binding protein EcfA1 (277 aa).

The 239-residue stretch at 5-243 folds into the ABC transporter domain; that stretch reads IRAQNVSFCY…VEVLKKIGLD (239 aa). 42-49 contacts ATP; the sequence is GHNGSGKS.

Belongs to the ABC transporter superfamily. Energy-coupling factor EcfA family. In terms of assembly, forms a stable energy-coupling factor (ECF) transporter complex composed of 2 membrane-embedded substrate-binding proteins (S component), 2 ATP-binding proteins (A component) and 2 transmembrane proteins (T component).

It is found in the cell membrane. ATP-binding (A) component of a common energy-coupling factor (ECF) ABC-transporter complex. Unlike classic ABC transporters this ECF transporter provides the energy necessary to transport a number of different substrates. In Caldanaerobacter subterraneus subsp. tengcongensis (strain DSM 15242 / JCM 11007 / NBRC 100824 / MB4) (Thermoanaerobacter tengcongensis), this protein is Energy-coupling factor transporter ATP-binding protein EcfA1.